We begin with the raw amino-acid sequence, 220 residues long: Glutathione S-transferase-like protein FUS3 (220 aa).

A GST N-terminal domain is found at 3-84 (SFGTLYTYMP…YVAQSGPQAS (82 aa)). In terms of domain architecture, GST C-terminal spans 90-220 (DAMSSAKIRQ…LIEKRRIGAK (131 aa)).

This sequence belongs to the GST superfamily.

Functionally, glutathione S-transferase-like protein; part of the gene cluster that mediates the biosynthesis of the mycotoxin fusarin C. Within the cluster, FUS1, FUS2, FUS8 and FUS9 are sufficient for fusarin production. The other FUS cluster members are not essential for fusarin C biosynthesis. In Gibberella moniliformis (strain M3125 / FGSC 7600) (Maize ear and stalk rot fungus), this protein is Glutathione S-transferase-like protein FUS3.